The sequence spans 282 residues: ATP phosphoribosyltransferase (282 aa).

The protein belongs to the ATP phosphoribosyltransferase family. Long subfamily. Mg(2+) is required as a cofactor.

The protein localises to the cytoplasm. It carries out the reaction 1-(5-phospho-beta-D-ribosyl)-ATP + diphosphate = 5-phospho-alpha-D-ribose 1-diphosphate + ATP. The protein operates within amino-acid biosynthesis; L-histidine biosynthesis; L-histidine from 5-phospho-alpha-D-ribose 1-diphosphate: step 1/9. Its activity is regulated as follows. Feedback inhibited by histidine. Its function is as follows. Catalyzes the condensation of ATP and 5-phosphoribose 1-diphosphate to form N'-(5'-phosphoribosyl)-ATP (PR-ATP). Has a crucial role in the pathway because the rate of histidine biosynthesis seems to be controlled primarily by regulation of HisG enzymatic activity. In Pyrobaculum neutrophilum (strain DSM 2338 / JCM 9278 / NBRC 100436 / V24Sta) (Thermoproteus neutrophilus), this protein is ATP phosphoribosyltransferase.